A 568-amino-acid chain; its full sequence is Involucrin (568 aa).

Disordered regions lie at residues 23–499 and 517–568; these read CSPA…EKEL and RKKH…HEVQ. Low complexity predominate over residues 25 to 36; that stretch reads PAQTQQEQTKQP. Basic and acidic residues predominate over residues 49 to 77; that stretch reads TQEKGFPKHEEKEANPVKDLPEQESEHHQ. The span at 78–88 shows a compositional bias: low complexity; the sequence is QPGPQKQQLQV. Positions 89 to 106 are enriched in basic and acidic residues; that stretch reads KKPEQELQEQELHSEKQP. Low complexity-rich tracts occupy residues 107-121, 133-154, and 172-181; these read QEPQ…QQQR, HQQP…QDVL, and PELPLGQQQK. The span at 193–213 shows a compositional bias: basic and acidic residues; the sequence is KQQKLHLVERHQEPQEQELHH. A compositionally biased stretch (low complexity) spans 217 to 232; that stretch reads QKQQQPQEQELQLVQH. 2 stretches are compositionally biased toward basic and acidic residues: residues 266–333 and 345–456; these read ESHE…HQET and KPHE…HLGK. Residues 457 to 467 show a composition bias toward low complexity; that stretch reads QQEQQIEYEGY. Ser-472 carries the post-translational modification Phosphoserine. 3 stretches are compositionally biased toward basic and acidic residues: residues 478 to 499, 517 to 532, and 551 to 568; these read KQEK…EKEL, RKKH…EKQI, and VKED…HEVQ.

Belongs to the involucrin family. Directly or indirectly cross-linked to cornifelin (CNFN). In terms of processing, substrate of transglutaminase. Specific glutamines or lysines are cross-linked to keratins, desmoplakin and to inter involucrin molecules. As to expression, keratinocytes of epidermis and other stratified squamous epithelia.

Its subcellular location is the cytoplasm. Part of the insoluble cornified cell envelope (CE) of stratified squamous epithelia. The sequence is that of Involucrin (Ivl) from Rattus norvegicus (Rat).